Consider the following 71-residue polypeptide: Brevinin-1CG4 (71 aa).

The first 22 residues, 1 to 22, serve as a signal peptide directing secretion; it reads MFTLKKSLLLLFFLGTINLSLC. Residues 23–45 constitute a propeptide, removed in mature form; that stretch reads EQERNADEEERRDDSDKRDVEVE. Cysteines 65 and 71 form a disulfide.

Belongs to the frog skin active peptide (FSAP) family. Brevinin subfamily. Expressed by the skin glands.

It localises to the secreted. Antimicrobial peptide active against a variety of Gram-positive and some Gram-negative bacterial strains. Has antifungal activity against C.albicans ATCC 10231 and a slime mold isolate. Has hemolytic activity against human erythrocytes. The polypeptide is Brevinin-1CG4 (Amolops chunganensis (Chungan torrent frog)).